The following is a 153-amino-acid chain: Transcriptional repressor NrdR 2 (153 aa).

A zinc finger lies at 3–34 (CPFCGQDDTQVKDSRPTDDNAAIRRRRACPGC). In terms of domain architecture, ATP-cone spans 49 to 139 (LVVVKKDGSR…VYRNFREAKD (91 aa)).

It belongs to the NrdR family. Zn(2+) is required as a cofactor.

In terms of biological role, negatively regulates transcription of bacterial ribonucleotide reductase nrd genes and operons by binding to NrdR-boxes. The chain is Transcriptional repressor NrdR 2 from Paramagnetospirillum magneticum (strain ATCC 700264 / AMB-1) (Magnetospirillum magneticum).